The sequence spans 221 residues: Pyridoxine/pyridoxamine 5'-phosphate oxidase (221 aa).

Residues methionine 1–arginine 21 form a disordered region. Residues arginine 10–tyrosine 13 and lysine 68 each bind substrate. FMN-binding positions include arginine 63–lysine 68, phenylalanine 78–threonine 79, arginine 84, lysine 85, and glutamine 107. The substrate site is built by tyrosine 125, arginine 129, and serine 133. Residues glutamine 143–serine 144 and tryptophan 189 each bind FMN. Residue arginine 195 to histidine 197 coordinates substrate. An FMN-binding site is contributed by arginine 199.

This sequence belongs to the pyridoxamine 5'-phosphate oxidase family. As to quaternary structure, homodimer. FMN serves as cofactor.

It carries out the reaction pyridoxamine 5'-phosphate + O2 + H2O = pyridoxal 5'-phosphate + H2O2 + NH4(+). The catalysed reaction is pyridoxine 5'-phosphate + O2 = pyridoxal 5'-phosphate + H2O2. It participates in cofactor metabolism; pyridoxal 5'-phosphate salvage; pyridoxal 5'-phosphate from pyridoxamine 5'-phosphate: step 1/1. It functions in the pathway cofactor metabolism; pyridoxal 5'-phosphate salvage; pyridoxal 5'-phosphate from pyridoxine 5'-phosphate: step 1/1. Functionally, catalyzes the oxidation of either pyridoxine 5'-phosphate (PNP) or pyridoxamine 5'-phosphate (PMP) into pyridoxal 5'-phosphate (PLP). This is Pyridoxine/pyridoxamine 5'-phosphate oxidase from Thermobifida fusca (strain YX).